The primary structure comprises 352 residues: Lipid storage droplets surface-binding protein 2 (352 aa).

Disordered stretches follow at residues 1 to 28 (MASA…DQPK) and 298 to 352 (NVEQ…VSSQ). The segment covering 298–309 (NVEQSGGSSSDA) has biased composition (polar residues). A compositionally biased stretch (low complexity) spans 315-329 (TTTSTTTTTTTSSTS).

The protein belongs to the perilipin family. In terms of tissue distribution, ubiquitous expression in early embryos. At stage 5 expression is restricted to the pole cells. At stage 11 expression is seen in the amnioserosa, refined to the fat body and midgut by stage 14. Also seen in the hindgut by the end of embryogenesis. Expression is seen in larval fat body (at protein level).

The protein resides in the cytoplasm. The protein localises to the lipid droplet. Its function is as follows. Essential for embryogenesis. Required for normal deposition of neutral lipids in the oocyte. This is Lipid storage droplets surface-binding protein 2 from Drosophila melanogaster (Fruit fly).